A 159-amino-acid chain; its full sequence is Cyclin-dependent kinase inhibitor 1 (159 aa).

An N-acetylserine modification is found at S2. S2 is covalently cross-linked (Glycyl serine ester (Ser-Gly) (interchain with G-Cter in ubiquitin)). Residues 12-40 (HRSKVCRCLFGPVDSEQLRRDCDALMAGC) form a C4-type zinc finger. The required for binding cyclins stretch occupies residues 17 to 24 (CRCLFGPV). Residues 53 to 58 (VTETPL) are required for binding CDKs. At S78 the chain carries Phosphoserine; by NUAK1. The tract at residues 78–106 (SPGSRSRDDLGGDKRPSTSSALLQGPAPE) is disordered. Residues 82-93 (RSRDDLGGDKRP) show a composition bias toward basic and acidic residues. S112 carries the post-translational modification Phosphoserine; by GSK3-beta. The tract at residues 118 to 142 (VSERPEDSPGGPGTSQGRKRRQTSL) is disordered. Phosphoserine is present on S125. Positions 135 to 159 (RKRRQTSLTDFYHSKRRLVFCKRKP) match the PIP-box K+4 motif motif. T140 is modified (phosphothreonine; by PKA, PKB/AKT1, PIM1 and PIM2). S141 bears the Phosphoserine; by NUAK1 mark. The tract at residues 147 to 159 (HSKRRLVFCKRKP) is interaction with TRIM39.

The protein belongs to the CDI family. As to quaternary structure, interacts with HDAC1; the interaction is prevented by competitive binding of C10orf90/FATS to HDAC1 facilitating acetylation and protein stabilization of CDKN1A/p21. Interacts with MKRN1. Interacts with PSMA3. Interacts with PCNA. Component of the ternary complex, cyclin D-CDK4-CDKN1A. Interacts (via its N-terminal domain) with CDK4; the interaction promotes the assembly of the cyclin D-CDK4 complex, its nuclear translocation and promotes the cyclin D-dependent enzyme activity of CDK4. Binding to CDK2 leads to CDK2/cyclin E inactivation at the G1-S phase DNA damage checkpoint, thereby arresting cells at the G1-S transition during DNA repair. Interacts with PIM1. Interacts with STK11. Interacts with NUAK1. Interacts with DTL and TRIM39. Interacts with PKP3; the interaction sequesters CDKN1A to the cytoplasm thereby repressing its role as an inhibitor of CDK4- and CDK6-driven RB1 phosphorylation. Phosphorylation of Thr-140 or Ser-141 impairs binding to PCNA. Phosphorylation at Ser-112 by GSK3-beta enhances ubiquitination by the DCX(DTL) complex. Phosphorylation of Thr-140 by PIM2 enhances its stability and inhibits cell proliferation. Phosphorylation of Thr-140 by PIM1 results in the relocation of CDKN1A to the cytoplasm and enhanced CDKN1A protein stability. UV radiation-induced phosphorylation at Ser-78 and Ser-141 by NUAK1 leads to its degradation. In terms of processing, ubiquitinated by MKRN1; leading to polyubiquitination and 26S proteasome-dependent degradation. Ubiquitinated by the DCX(DTL) complex, also named CRL4(CDT2) complex, leading to its degradation during S phase or following UV irradiation. Ubiquitination by the DCX(DTL) complex is essential to control replication licensing and is PCNA-dependent: interacts with PCNA via its PIP-box, while the presence of the containing the 'K+4' motif in the PIP box, recruit the DCX(DTL) complex, leading to its degradation. Ubiquitination at Ser-2 leads to degradation by the proteasome pathway. Ubiquitinated by RNF114; leading to proteasomal degradation. Post-translationally, acetylation leads to protein stability. Acetylated in vitro on Lys-136, Lys-149, Lys-156 and Lys-158. Deacetylation by HDAC1 is prevented by competitive binding of C10orf90/FATS to HDAC1. As to expression, expressed in keratinocytes (at protein level).

Its subcellular location is the cytoplasm. It localises to the nucleus. May be involved in p53/TP53 mediated inhibition of cellular proliferation in response to DNA damage. Binds to and inhibits cyclin-dependent kinase activity, preventing phosphorylation of critical cyclin-dependent kinase substrates and blocking cell cycle progression. Functions in the nuclear localization and assembly of cyclin D-CDK4 complex and promotes its kinase activity towards RB1. At higher stoichiometric ratios, inhibits the kinase activity of the cyclin D-CDK4 complex. Inhibits DNA synthesis by DNA polymerase delta by competing with POLD3 for PCNA binding. Plays an important role in controlling cell cycle progression and DNA damage-induced G2 arrest. In terms of biological role, plays an important role in controlling cell cycle progression and DNA damage-induced G2 arrest. Involved in p53/TP53 mediated inhibition of cellular proliferation in response to DNA damage. Also involved in p53-independent DNA damage-induced G2 arrest mediated by CREB3L1 in astrocytes and osteoblasts. Binds to and inhibits cyclin-dependent kinase activity, preventing phosphorylation of critical cyclin-dependent kinase substrates and blocking cell cycle progression. Functions in the nuclear localization and assembly of cyclin D-CDK4 complex and promotes its kinase activity towards RB1. At higher stoichiometric ratios, inhibits the kinase activity of the cyclin D-CDK4 complex. Inhibits DNA synthesis by DNA polymerase delta by competing with POLD3 for PCNA binding. Negatively regulates the CDK4- and CDK6-driven phosphorylation of RB1 in keratinocytes, thereby resulting in the release of E2F1 and subsequent transcription of E2F1-driven G1/S phase promoting genes. This Mus musculus (Mouse) protein is Cyclin-dependent kinase inhibitor 1 (Cdkn1a).